Reading from the N-terminus, the 448-residue chain is Exodeoxyribonuclease 7 large subunit (448 aa).

This sequence belongs to the XseA family. As to quaternary structure, heterooligomer composed of large and small subunits.

It localises to the cytoplasm. It catalyses the reaction Exonucleolytic cleavage in either 5'- to 3'- or 3'- to 5'-direction to yield nucleoside 5'-phosphates.. Its function is as follows. Bidirectionally degrades single-stranded DNA into large acid-insoluble oligonucleotides, which are then degraded further into small acid-soluble oligonucleotides. This Bacillus pumilus (strain SAFR-032) protein is Exodeoxyribonuclease 7 large subunit.